A 242-amino-acid chain; its full sequence is Probable transcriptional regulatory protein Csac_0964 (242 aa).

The interval 1-20 (MSGHSKWANIRHKKEKTDAQ) is disordered.

The protein belongs to the TACO1 family.

The protein resides in the cytoplasm. The sequence is that of Probable transcriptional regulatory protein Csac_0964 from Caldicellulosiruptor saccharolyticus (strain ATCC 43494 / DSM 8903 / Tp8T 6331).